Reading from the N-terminus, the 384-residue chain is Deoxyguanosinetriphosphate triphosphohydrolase-like protein (384 aa).

The region spanning 62 to 198 (RLTHSLEVST…AALADDISYI (137 aa)) is the HD domain.

It belongs to the dGTPase family. Type 2 subfamily.

The sequence is that of Deoxyguanosinetriphosphate triphosphohydrolase-like protein from Rickettsia rickettsii (strain Iowa).